The chain runs to 220 residues: Probable cutinase 5 (220 aa).

Positions Met-1–Ala-18 are cleaved as a signal peptide. 2 disulfide bridges follow: Cys-42/Cys-121 and Cys-68/Cys-82. Ser-132 serves as the catalytic Nucleophile. A disulfide bridge connects residues Cys-183 and Cys-190. Asp-187 is a catalytic residue. His-200 (proton donor/acceptor) is an active-site residue.

The protein belongs to the cutinase family.

Its subcellular location is the secreted. The enzyme catalyses cutin + H2O = cutin monomers.. Functionally, catalyzes the hydrolysis of complex carboxylic polyesters found in the cell wall of plants. Degrades cutin, a macromolecule that forms the structure of the plant cuticle. This Aspergillus terreus (strain NIH 2624 / FGSC A1156) protein is Probable cutinase 5.